The following is a 308-amino-acid chain: Tyrosine recombinase XerC (308 aa).

The Core-binding (CB) domain occupies 20–101 (SKLHTLIDDF…SVKAFSSWAQ (82 aa)). The region spanning 122 to 302 (DLPKILGEQQ…SNKRLLEAFN (181 aa)) is the Tyr recombinase domain. Active-site residues include Arg163, Lys187, His254, Arg257, and His280. The O-(3'-phospho-DNA)-tyrosine intermediate role is filled by Tyr289.

Belongs to the 'phage' integrase family. XerC subfamily. As to quaternary structure, forms a cyclic heterotetrameric complex composed of two molecules of XerC and two molecules of XerD.

The protein resides in the cytoplasm. Site-specific tyrosine recombinase, which acts by catalyzing the cutting and rejoining of the recombining DNA molecules. The XerC-XerD complex is essential to convert dimers of the bacterial chromosome into monomers to permit their segregation at cell division. It also contributes to the segregational stability of plasmids. The polypeptide is Tyrosine recombinase XerC (Corynebacterium glutamicum (strain ATCC 13032 / DSM 20300 / JCM 1318 / BCRC 11384 / CCUG 27702 / LMG 3730 / NBRC 12168 / NCIMB 10025 / NRRL B-2784 / 534)).